Reading from the N-terminus, the 114-residue chain is QDAAKGEAVFKQCMTCHRADKNMVGPALAGVVGRKAGTAPGFSYSPLNHHSGEAGLVWTQENIITYLADPNAFLKKFLTDKGHADQAVGATKMTFKLANEQQRKDVVAYLATLK.

The residue at position 1 (Gln-1) is a Pyrrolidone carboxylic acid. 4 residues coordinate heme c: Cys-13, Cys-16, His-17, and Met-93.

The protein belongs to the cytochrome c family. Binds 1 heme c group covalently per subunit.

The protein resides in the periplasm. Its function is as follows. Cytochrome c2 is found mainly in purple, non-sulfur, photosynthetic bacteria where it functions as the electron donor to the oxidized bacteriochlorophyll in the photophosphorylation pathway. However, it may also have a role in the respiratory chain and is found in some non-photosynthetic bacteria. The chain is Cytochrome c2 from Rhodopseudomonas palustris.